The chain runs to 381 residues: Dual specificity protein phosphatase 6 (381 aa).

Residues 30–148 (GNEQLLLMDC…FQAEFALHCE (119 aa)) form the Rhodanese domain. The disordered stretch occupies residues 176–203 (SSSDIESDLDRDPNSATDSDGSPLSNSQ). Positions 189–203 (NSATDSDGSPLSNSQ) are enriched in polar residues. A Tyrosine-protein phosphatase domain is found at 206–349 (FPVEILPFLY…LLDFERTLGL (144 aa)). The active-site Phosphocysteine intermediate is the Cys-293.

It belongs to the protein-tyrosine phosphatase family. Non-receptor class dual specificity subfamily. In terms of assembly, interacts with MAPK1/ERK2. Post-translationally, ubiquitinated by the SCF(FBXO31) complex, leading to its proteasomal degradation. Expressed in lung, heart, brain, and kidney, but not significantly in skeletal muscle or testis.

Its subcellular location is the cytoplasm. The enzyme catalyses O-phospho-L-tyrosyl-[protein] + H2O = L-tyrosyl-[protein] + phosphate. It carries out the reaction O-phospho-L-seryl-[protein] + H2O = L-seryl-[protein] + phosphate. The catalysed reaction is O-phospho-L-threonyl-[protein] + H2O = L-threonyl-[protein] + phosphate. Its function is as follows. Dual specificity protein phosphatase, which mediates dephosphorylation and inactivation of MAP kinases. Has a specificity for the ERK family. Implicated in muscle and neuronal differentiation. Plays an important role in alleviating chronic postoperative pain. Necessary for the normal dephosphorylation of the long-lasting phosphorylated forms of spinal MAPK1/3 and MAP kinase p38 induced by peripheral surgery, which drives the resolution of acute postoperative allodynia. Also important for dephosphorylation of MAPK1/3 in local wound tissue, which further contributes to resolution of acute pain. This Rattus norvegicus (Rat) protein is Dual specificity protein phosphatase 6 (Dusp6).